Reading from the N-terminus, the 398-residue chain is L-rhamnonate dehydratase (398 aa).

Positions 22 and 48 each coordinate substrate. Aspartate 214, glutamate 241, and glutamate 269 together coordinate Mg(2+). The Proton acceptor role is filled by histidine 319. Residue glutamate 339 coordinates substrate.

This sequence belongs to the mandelate racemase/muconate lactonizing enzyme family. RhamD subfamily. Homooctamer; tetramer of dimers. Mg(2+) is required as a cofactor.

It carries out the reaction L-rhamnonate = 2-dehydro-3-deoxy-L-rhamnonate + H2O. In terms of biological role, catalyzes the dehydration of L-rhamnonate to 2-keto-3-deoxy-L-rhamnonate (KDR). This is L-rhamnonate dehydratase from Verminephrobacter eiseniae (strain EF01-2).